Consider the following 146-residue polypeptide: Envelope protein OPG155 (146 aa).

A helical; Signal-anchor for type II membrane protein membrane pass occupies residues Met-1 to Ile-21. Residues Gln-22–Leu-146 lie on the Virion surface side of the membrane.

Belongs to the orthopoxvirus OPG155 protein family. In terms of assembly, part of a stable entry-fusion complex (EFC) which is at least composed of proteins OPG143, OPG147, OPG155, OPG086, OPG094, OPG107, OPG104, and OPG099. Formation of the viral membrane is necessary for the assembly of the complex. Interacts directly with protein OPG107. In terms of processing, contains two intramolecular disulfide bonds. They are created by the viral disulfide bond formation pathway, a poxvirus-specific pathway that operates on the cytoplasmic side of the MV membranes.

It localises to the virion membrane. In terms of biological role, envelope protein required for virus entry into host cell and for cell-cell fusion (syncytium formation). The protein is Envelope protein OPG155 (OPG155) of Bos taurus (Bovine).